The chain runs to 99 residues: Probable small ribosomal subunit protein cS23 (99 aa).

It belongs to the chloroplast-specific ribosomal protein cS23 family. In terms of assembly, part of the 30S ribosomal subunit.

Functionally, probably a ribosomal protein or a ribosome-associated protein. The sequence is that of Probable small ribosomal subunit protein cS23 from Synechococcus sp. (strain JA-3-3Ab) (Cyanobacteria bacterium Yellowstone A-Prime).